Consider the following 281-residue polypeptide: Glycerol uptake facilitator protein (281 aa).

Residues 1-5 (MSQTS) lie on the Cytoplasmic side of the membrane. A helical transmembrane segment spans residues 6–34 (TLKGQCIAEFLGTGLLIFFGVGCVAALKV). Residues 35-39 (AGASF) lie on the Periplasmic side of the membrane. A helical transmembrane segment spans residues 40–60 (GQWEISVIWGLGVAMAIYLTA). At 61-63 (GVS) the chain is on the cytoplasmic side. An intramembrane segment occupies 64–67 (GAHL). Positions 68 to 70 (NPA) match the NPA 1 motif. Positions 68–78 (NPAVTIALWLF) form an intramembrane region, helical. Over 79 to 84 (ACFDKR) the chain is Cytoplasmic. Residues 85–108 (KVIPFIVSQVAGAFCAAALVYGLY) traverse the membrane as a helical segment. The Periplasmic segment spans residues 109-143 (YNLFFDFEQTHHIVRGSVESVDLAGTFSTYPNPHI). The helical transmembrane segment at 144–169 (NFVQAFAVEMVITAILMGLILALTDD) threads the bilayer. Residues 170–177 (GNGVPRGP) are Cytoplasmic-facing. The helical transmembrane segment at 178–194 (LAPLLIGLLIAVIGASM) threads the bilayer. At 195–198 (GPLT) the chain is on the periplasmic side. Residues 199-202 (GFAM) lie within the membrane without spanning it. The NPA 2 signature appears at 203–205 (NPA). Residues 203–216 (NPARDFGPKVFAWL) constitute an intramembrane region (helical). At 217 to 231 (AGWGNVAFTGGRDIP) the chain is on the periplasmic side. Residues 232–254 (YFLVPLFSPIVGAIVGAFAYRKL) form a helical membrane-spanning segment. The Cytoplasmic segment spans residues 255–281 (IGRHLPCDICVVEEKETTTPSEQKASL).

The protein belongs to the MIP/aquaporin (TC 1.A.8) family. Homotetramer.

Its subcellular location is the cell inner membrane. It catalyses the reaction glycerol(in) = glycerol(out). In terms of biological role, mediates glycerol diffusion across the cytoplasmic membrane via a pore-type mechanism. The polypeptide is Glycerol uptake facilitator protein (glpF) (Shigella flexneri).